Consider the following 97-residue polypeptide: MAKTASPGATPPGNGTEPLPDNYEMALAELETLVARMEGGALSLEDSLAAYRRGATLVAFCQQQLEKVEQQVRVLDGATLKPLSSGTAATDGEDDDL.

A disordered region spans residues 1–22 (MAKTASPGATPPGNGTEPLPDN).

The protein belongs to the XseB family. In terms of assembly, heterooligomer composed of large and small subunits.

It localises to the cytoplasm. The enzyme catalyses Exonucleolytic cleavage in either 5'- to 3'- or 3'- to 5'-direction to yield nucleoside 5'-phosphates.. Bidirectionally degrades single-stranded DNA into large acid-insoluble oligonucleotides, which are then degraded further into small acid-soluble oligonucleotides. The sequence is that of Exodeoxyribonuclease 7 small subunit from Burkholderia cenocepacia (strain HI2424).